A 384-amino-acid chain; its full sequence is N-acetyldiaminopimelate deacetylase (384 aa).

Residue Asp-74 is part of the active site. Glu-133 (proton acceptor) is an active-site residue.

This sequence belongs to the peptidase M20A family. N-acetyldiaminopimelate deacetylase subfamily.

The catalysed reaction is N-acetyl-(2S,6S)-2,6-diaminopimelate + H2O = (2S,6S)-2,6-diaminopimelate + acetate. It functions in the pathway amino-acid biosynthesis; L-lysine biosynthesis via DAP pathway; LL-2,6-diaminopimelate from (S)-tetrahydrodipicolinate (acetylase route): step 3/3. Its function is as follows. Catalyzes the conversion of N-acetyl-diaminopimelate to diaminopimelate and acetate. The chain is N-acetyldiaminopimelate deacetylase from Pediococcus pentosaceus (strain ATCC 25745 / CCUG 21536 / LMG 10740 / 183-1w).